The following is a 299-amino-acid chain: Ethylmalonyl-CoA decarboxylase (299 aa).

The protein belongs to the enoyl-CoA hydratase/isomerase family.

Its subcellular location is the cytoplasm. The protein localises to the cytosol. It catalyses the reaction (2S)-ethylmalonyl-CoA + H(+) = butanoyl-CoA + CO2. It carries out the reaction (S)-methylmalonyl-CoA + H(+) = propanoyl-CoA + CO2. The enzyme catalyses (2R)-ethylmalonyl-CoA + H(+) = butanoyl-CoA + CO2. In terms of biological role, decarboxylates ethylmalonyl-CoA, a potentially toxic metabolite, to form butyryl-CoA, suggesting it might be involved in metabolite proofreading. Acts preferentially on (S)-ethylmalonyl-CoA but also has some activity on the (R)-isomer. Also has methylmalonyl-CoA decarboxylase activity at lower level. This is Ethylmalonyl-CoA decarboxylase (echdc1) from Xenopus laevis (African clawed frog).